The following is a 512-amino-acid chain: uncharacterized protein (512 aa).

A run of 12 helical transmembrane segments spans residues 25–45 (GFYTAGLQLGSGAVVLPVICA), 55–75 (LLYPAFCIGAILGNSLSPLIL), 96–116 (LVVCNAAVPWTGVGVAAVFLA), 123–143 (VVTGVSSVAYTDMISSMLPAV), 148–168 (LLLTQGAAGSVLATGVTLVIV), 183–203 (LLWLGAAGLVCSGIAALFVGP), 238–258 (MTTYLLFVPISLGTTFFSLRA), 263–283 (GSLHVLVILSSIGLVVGSMLW), 294–314 (GLLLGSALLNAAAALLCMVAE), 329–349 (FLLATVAAQTVVAASISWISV), 359–379 (LICVGSTLAAVEATVLGVALG), and 386–406 (ATIWPVVVVLTLAVIAAVASL). Positions 428–512 (YRPATPNPIH…APLDAGQRIA (85 aa)) are disordered.

It localises to the cell membrane. This is an uncharacterized protein from Mycobacterium tuberculosis (strain CDC 1551 / Oshkosh).